We begin with the raw amino-acid sequence, 397 residues long: 2-isopropylmalate synthase 1 (397 aa).

Residues 6–268 enclose the Pyruvate carboxyltransferase domain; that stretch reads VIVFDTTLRD…VHGINTKEIY (263 aa). Mn(2+) is bound by residues aspartate 15, histidine 203, histidine 205, and asparagine 239.

The protein belongs to the alpha-IPM synthase/homocitrate synthase family. LeuA type 1 subfamily. As to quaternary structure, homodimer. The cofactor is Mn(2+).

The protein resides in the cytoplasm. It catalyses the reaction 3-methyl-2-oxobutanoate + acetyl-CoA + H2O = (2S)-2-isopropylmalate + CoA + H(+). It participates in amino-acid biosynthesis; L-leucine biosynthesis; L-leucine from 3-methyl-2-oxobutanoate: step 1/4. Functionally, catalyzes the condensation of the acetyl group of acetyl-CoA with 3-methyl-2-oxobutanoate (2-ketoisovalerate) to form 3-carboxy-3-hydroxy-4-methylpentanoate (2-isopropylmalate). The chain is 2-isopropylmalate synthase 1 from Caldanaerobacter subterraneus subsp. tengcongensis (strain DSM 15242 / JCM 11007 / NBRC 100824 / MB4) (Thermoanaerobacter tengcongensis).